The primary structure comprises 437 residues: MKKAILYLNQFFGQVGGEDKADYEPEIINGQVGAAMMLNGVLEGAEVTHTIICGDNFMGTYKDEAVSRIMGFLEDKEFDIFLAGPAFQAGRYGVACGEICKVVKEKYNVPVVTSMHVENPGVQMFKKDMYVMIGGNNAGRMRQDMSAMAKVANKIIAGEKIGPADEEGFFPRGKRHQHWREDGKPASERVVDMLLKKLSGEEFQTELPIPKSDRVEIAAPIKDLSKATIAVVTTGGIVPVDNPDRIQSASATRWGMYDVTGLERLEGGVYKTIHAGFDPAAADADPNVIVPLDALRAYEKEGKIGKVHEYFYSTVGTGTTEAEAARMAKEIVVKLKQGGVDGVIMTSTUGTCTRCGATMVKEIERAGFPIVQMCNLIPVASTVGANKIVPTISIPYPLGDPSTSKEQQWKLRYHRVGTALDALTVDVQEQTIFKVKI.

Selenocysteine 349 is a catalytic residue. A non-standard amino acid (selenocysteine) is located at residue selenocysteine 349.

This sequence belongs to the GrdB/GrdF/GrdH family. As to quaternary structure, heterotetramer of two alpha and two beta subunits. Component of the betaine reductase complex, together with components A and C. PB is substrate specific.

It carries out the reaction acetyl phosphate + trimethylamine + [thioredoxin]-disulfide + H2O = glycine betaine + [thioredoxin]-dithiol + phosphate + H(+). In terms of biological role, in the first step of betaine reductase, the substrate is bound to component PB via a Schiff base intermediate. Then the PB-activated substrate is nucleophilically attacked by the selenol anion of component PA to transform it to a carboxymethylated selenoether and the respective amine. By action of component PC, acetyl phosphate is formed, leaving component PA in its oxidized state. Finally component PA becomes reduced by the thioredoxin system to start a new catalytic cycle of reductive deamination. This chain is Betaine reductase complex component B subunit beta (grdH), found in Peptoclostridium acidaminophilum (Eubacterium acidaminophilum).